We begin with the raw amino-acid sequence, 484 residues long: Glycogen synthase 2 (484 aa).

Arg-15 is an ADP-alpha-D-glucose binding site.

This sequence belongs to the glycosyltransferase 1 family. Bacterial/plant glycogen synthase subfamily.

The enzyme catalyses [(1-&gt;4)-alpha-D-glucosyl](n) + ADP-alpha-D-glucose = [(1-&gt;4)-alpha-D-glucosyl](n+1) + ADP + H(+). Its pathway is glycan biosynthesis; glycogen biosynthesis. In terms of biological role, synthesizes alpha-1,4-glucan chains using ADP-glucose. The protein is Glycogen synthase 2 of Geobacter sulfurreducens (strain ATCC 51573 / DSM 12127 / PCA).